Reading from the N-terminus, the 423-residue chain is Glycine amidinotransferase, mitochondrial (423 aa).

The transit peptide at 1–43 (MLRVRCLRGGSRGAEAVHYIGSRLGGSLTGWVQRTFQSTQAAT) directs the protein to the mitochondrion. Serine 46 and serine 49 each carry phosphoserine. Residue aspartate 170 participates in arginine binding. Active-site residues include aspartate 254 and histidine 303. Positions 305, 322, 354, and 355 each coordinate arginine. Position 385 is an N6-acetyllysine (lysine 385). Cysteine 407 functions as the Amidino-cysteine intermediate in the catalytic mechanism.

This sequence belongs to the amidinotransferase family. In terms of assembly, homodimer. Expressed in kidney, brain, gonads, uterus, and embryonic head, chest and abdomen. Maternally expressed in the placenta and yolk sac of embryos.

Its subcellular location is the mitochondrion inner membrane. It catalyses the reaction L-arginine + glycine = guanidinoacetate + L-ornithine. The catalysed reaction is 4-aminobutanoate + L-arginine = 4-guanidinobutanoate + L-ornithine. It carries out the reaction beta-alanine + L-arginine = 3-guanidinopropanoate + L-ornithine. The enzyme catalyses taurine + L-arginine = taurocyamine + L-ornithine. The protein operates within amine and polyamine biosynthesis; creatine biosynthesis; creatine from L-arginine and glycine: step 1/2. In terms of biological role, transamidinase that catalyzes the transfer of the amidino group of L-arginine onto the amino moiety of acceptor metabolites such as glycine, beta-alanine, gamma-aminobutyric acid (GABA) and taurine yielding the corresponding guanidine derivatives. Catalyzes the rate-limiting step of creatine biosynthesis, namely the transfer of the amidino group from L-arginine to glycine to generate guanidinoacetate, which is then methylated by GAMT to form creatine. Provides creatine as a source for ATP generation in tissues with high energy demands, in particular skeletal muscle, heart and brain. This Mus musculus (Mouse) protein is Glycine amidinotransferase, mitochondrial (Gatm).